The primary structure comprises 95 residues: Ribonuclease P protein component 1 (95 aa).

This sequence belongs to the eukaryotic/archaeal RNase P protein component 1 family. In terms of assembly, consists of a catalytic RNA component and at least 4 protein subunits. Forms a subcomplex with Rnp4 which stimulates the catalytic RNA.

It is found in the cytoplasm. The enzyme catalyses Endonucleolytic cleavage of RNA, removing 5'-extranucleotides from tRNA precursor.. Functionally, part of ribonuclease P, a protein complex that generates mature tRNA molecules by cleaving their 5'-ends. This is Ribonuclease P protein component 1 from Methanocaldococcus jannaschii (strain ATCC 43067 / DSM 2661 / JAL-1 / JCM 10045 / NBRC 100440) (Methanococcus jannaschii).